The primary structure comprises 226 residues: Cytidylate kinase (226 aa).

ATP is bound at residue 11–19 (GPAAAGKST).

Belongs to the cytidylate kinase family. Type 1 subfamily.

It localises to the cytoplasm. The enzyme catalyses CMP + ATP = CDP + ADP. It catalyses the reaction dCMP + ATP = dCDP + ADP. In Bacillus licheniformis (strain ATCC 14580 / DSM 13 / JCM 2505 / CCUG 7422 / NBRC 12200 / NCIMB 9375 / NCTC 10341 / NRRL NRS-1264 / Gibson 46), this protein is Cytidylate kinase.